The sequence spans 357 residues: Heat-inducible transcription repressor HrcA (357 aa).

Belongs to the HrcA family.

Its function is as follows. Negative regulator of class I heat shock genes (grpE-dnaK-dnaJ and groELS operons). Prevents heat-shock induction of these operons. This is Heat-inducible transcription repressor HrcA from Ureaplasma parvum serovar 3 (strain ATCC 27815 / 27 / NCTC 11736).